Here is a 267-residue protein sequence, read N- to C-terminus: MEMO1 family protein MA_0601 (267 aa).

Belongs to the MEMO1 family.

The protein is MEMO1 family protein MA_0601 of Methanosarcina acetivorans (strain ATCC 35395 / DSM 2834 / JCM 12185 / C2A).